We begin with the raw amino-acid sequence, 248 residues long: MKAQVKTIEGGVAKDIELPAMFSEEYRPDLIRKAVLALQSTRRQPHGSYPYAGICSSAVGWGSGRGASHVPRLKNGSRAAKVPQAKGGREAHPPVTAKVLIKEINAKEKQKAFRSAVAASIRADLISSRGHRFEGTVPLIFEDKFENLAKTQEVISALTNIGVYSDIERSKESRKVRAGRGKLRGRRYKQRKSLLIVTSGPEFRAARNLAGVDVVTVDQLNVEHLAPGMQAGRLTVWTESAVIRLEGR.

Positions His-69–His-92 are disordered.

This sequence belongs to the universal ribosomal protein uL4 family. As to quaternary structure, part of the 50S ribosomal subunit.

In terms of biological role, one of the primary rRNA binding proteins, this protein initially binds near the 5'-end of the 23S rRNA. It is important during the early stages of 50S assembly. It makes multiple contacts with different domains of the 23S rRNA in the assembled 50S subunit and ribosome. Its function is as follows. Forms part of the polypeptide exit tunnel. The chain is Large ribosomal subunit protein uL4 from Methanoregula boonei (strain DSM 21154 / JCM 14090 / 6A8).